The following is a 151-amino-acid chain: 3-hydroxyacyl-[acyl-carrier-protein] dehydratase FabZ (151 aa).

His-56 is an active-site residue.

The protein belongs to the thioester dehydratase family. FabZ subfamily.

It is found in the cytoplasm. It carries out the reaction a (3R)-hydroxyacyl-[ACP] = a (2E)-enoyl-[ACP] + H2O. Functionally, involved in unsaturated fatty acids biosynthesis. Catalyzes the dehydration of short chain beta-hydroxyacyl-ACPs and long chain saturated and unsaturated beta-hydroxyacyl-ACPs. The polypeptide is 3-hydroxyacyl-[acyl-carrier-protein] dehydratase FabZ (Rhodopseudomonas palustris (strain ATCC BAA-98 / CGA009)).